The primary structure comprises 861 residues: Bifunctional uridylyltransferase/uridylyl-removing enzyme (861 aa).

A uridylyltransferase region spans residues 1–321; sequence MKNDNRIIKN…VYHQKQKIIR (321 aa). The tract at residues 322–678 is uridylyl-removing; that stretch reads LDDEFQLSNR…IMPHHSQGGT (357 aa). The 123-residue stretch at 440-562 folds into the HD domain; the sequence is VDQHTLFVIR…LPHARYLDYL (123 aa). 2 ACT domains span residues 679–760 and 788–861; these read EVFI…AVSR and QLFL…KSKY.

Belongs to the GlnD family. Mg(2+) serves as cofactor.

It carries out the reaction [protein-PII]-L-tyrosine + UTP = [protein-PII]-uridylyl-L-tyrosine + diphosphate. The catalysed reaction is [protein-PII]-uridylyl-L-tyrosine + H2O = [protein-PII]-L-tyrosine + UMP + H(+). Its activity is regulated as follows. Uridylyltransferase (UTase) activity is inhibited by glutamine, while glutamine activates uridylyl-removing (UR) activity. In terms of biological role, modifies, by uridylylation and deuridylylation, the PII regulatory proteins (GlnB and homologs), in response to the nitrogen status of the cell that GlnD senses through the glutamine level. Under low glutamine levels, catalyzes the conversion of the PII proteins and UTP to PII-UMP and PPi, while under higher glutamine levels, GlnD hydrolyzes PII-UMP to PII and UMP (deuridylylation). Thus, controls uridylylation state and activity of the PII proteins, and plays an important role in the regulation of nitrogen assimilation and metabolism. This is Bifunctional uridylyltransferase/uridylyl-removing enzyme from Legionella pneumophila subsp. pneumophila (strain Philadelphia 1 / ATCC 33152 / DSM 7513).